Reading from the N-terminus, the 85-residue chain is Elongation factor 1-beta (85 aa).

It belongs to the EF-1-beta/EF-1-delta family.

In terms of biological role, promotes the exchange of GDP for GTP in EF-1-alpha/GDP, thus allowing the regeneration of EF-1-alpha/GTP that could then be used to form the ternary complex EF-1-alpha/GTP/AAtRNA. This is Elongation factor 1-beta from Methanosphaerula palustris (strain ATCC BAA-1556 / DSM 19958 / E1-9c).